Consider the following 589-residue polypeptide: MSQSNTPLKRKKTENGYSENGSTTGATSNQIRELKRATTVDYVYRDQESKDKIKPLNGFVTPLLTDLYQITMAYSLWKNNRHEIPAVFDLYFRKSPFGGEFTVFAGLEEVIRFVSDFHYTKEEVGFIKEMIPDCEQEFLDYLSKLDSSSVTLYAMKEGSVVFPRVPLLRVEGPMILCQLFETTLLCLVNFASLVATNAARHRLAVGKEKVMLEFGLRRAQGPDGAMSASRYSYLGGADGTSNVLAHCFFGIPIRGTHAHSFITNYSGPDELLDASIKDTNGNVHNLLEMSQKYRDELGYTATNLSELVAFVAYARTFPNGLVALVDTYDTLASGVPNFICVALALHQLGYKAVGIRLDSGDLSYLSKASRKLFKQIGEQFKIDYFEKFSIVASNDLNEPTIIALNRQGHEIDVFAIGTNLVTCQAQPALGCVYKLVEINGSPRIKLSQEANKITLPGRKTAYRLFGSEGHPLVDLLVDDNDMIKDGSKQIPQVGKKVLCLHPFEEQKRVIVTPVQIEKLHHIVFEKGQLTMPLPALNDIREYCFQQISKVREDHLRNSNPTPYKVSVTKELFDTLHNLWLDSVPIKEMK.

Residues methionine 1–glutamine 30 form a disordered region. Residues asparagine 15–glutamine 30 are compositionally biased toward polar residues. 2 residues coordinate nicotinate: tyrosine 68 and threonine 256. Histidine 259 bears the Phosphohistidine mark. Arginine 356 serves as a coordination point for nicotinate. Threonine 418 contributes to the 5-phospho-alpha-D-ribose 1-diphosphate binding site.

This sequence belongs to the NAPRTase family. Mg(2+) is required as a cofactor. It depends on Mn(2+) as a cofactor. In terms of processing, transiently phosphorylated on a His residue during the reaction cycle. Phosphorylation strongly increases the affinity for substrates and increases the rate of nicotinate D-ribonucleotide production. Dephosphorylation regenerates the low-affinity form of the enzyme, leading to product release.

The catalysed reaction is nicotinate + 5-phospho-alpha-D-ribose 1-diphosphate + ATP + H2O = nicotinate beta-D-ribonucleotide + ADP + phosphate + diphosphate. It participates in cofactor biosynthesis; NAD(+) biosynthesis; nicotinate D-ribonucleotide from nicotinate: step 1/1. Catalyzes the first step in the biosynthesis of NAD from nicotinic acid, the ATP-dependent synthesis of beta-nicotinate D-ribonucleotide from nicotinate and 5-phospho-D-ribose 1-phosphate. Helps prevent cellular oxidative stress via its role in NAD biosynthesis. This chain is Nicotinate phosphoribosyltransferase (naprt), found in Dictyostelium discoideum (Social amoeba).